The following is a 421-amino-acid chain: 3-phosphoshikimate 1-carboxyvinyltransferase (421 aa).

Residues K19, S20, and R24 each coordinate 3-phosphoshikimate. Residue K19 participates in phosphoenolpyruvate binding. Positions 88 and 116 each coordinate phosphoenolpyruvate. 3-phosphoshikimate-binding residues include S160, Q162, D307, and K334. Q162 lines the phosphoenolpyruvate pocket. D307 functions as the Proton acceptor in the catalytic mechanism. Phosphoenolpyruvate is bound by residues R338 and R380.

It belongs to the EPSP synthase family. As to quaternary structure, monomer.

Its subcellular location is the cytoplasm. It catalyses the reaction 3-phosphoshikimate + phosphoenolpyruvate = 5-O-(1-carboxyvinyl)-3-phosphoshikimate + phosphate. It participates in metabolic intermediate biosynthesis; chorismate biosynthesis; chorismate from D-erythrose 4-phosphate and phosphoenolpyruvate: step 6/7. Functionally, catalyzes the transfer of the enolpyruvyl moiety of phosphoenolpyruvate (PEP) to the 5-hydroxyl of shikimate-3-phosphate (S3P) to produce enolpyruvyl shikimate-3-phosphate and inorganic phosphate. The protein is 3-phosphoshikimate 1-carboxyvinyltransferase of Thermotoga sp. (strain RQ2).